Here is a 455-residue protein sequence, read N- to C-terminus: Argininosuccinate lyase (455 aa).

Belongs to the lyase 1 family. Argininosuccinate lyase subfamily.

The protein resides in the cytoplasm. It carries out the reaction 2-(N(omega)-L-arginino)succinate = fumarate + L-arginine. Its pathway is amino-acid biosynthesis; L-arginine biosynthesis; L-arginine from L-ornithine and carbamoyl phosphate: step 3/3. The sequence is that of Argininosuccinate lyase from Roseiflexus sp. (strain RS-1).